The following is a 307-amino-acid chain: 4-hydroxy-3-methylbut-2-enyl diphosphate reductase (307 aa).

Residue cysteine 12 participates in [4Fe-4S] cluster binding. Residues histidine 41 and histidine 74 each contribute to the (2E)-4-hydroxy-3-methylbut-2-enyl diphosphate site. Dimethylallyl diphosphate-binding residues include histidine 41 and histidine 74. 2 residues coordinate isopentenyl diphosphate: histidine 41 and histidine 74. Cysteine 96 contributes to the [4Fe-4S] cluster binding site. (2E)-4-hydroxy-3-methylbut-2-enyl diphosphate is bound at residue histidine 124. Residue histidine 124 participates in dimethylallyl diphosphate binding. Residue histidine 124 coordinates isopentenyl diphosphate. The Proton donor role is filled by glutamate 126. Residue threonine 165 coordinates (2E)-4-hydroxy-3-methylbut-2-enyl diphosphate. A [4Fe-4S] cluster-binding site is contributed by cysteine 195. Residues serine 223, serine 224, asparagine 225, and serine 267 each contribute to the (2E)-4-hydroxy-3-methylbut-2-enyl diphosphate site. Serine 223, serine 224, asparagine 225, and serine 267 together coordinate dimethylallyl diphosphate. Residues serine 223, serine 224, asparagine 225, and serine 267 each coordinate isopentenyl diphosphate.

Belongs to the IspH family. Requires [4Fe-4S] cluster as cofactor.

It carries out the reaction isopentenyl diphosphate + 2 oxidized [2Fe-2S]-[ferredoxin] + H2O = (2E)-4-hydroxy-3-methylbut-2-enyl diphosphate + 2 reduced [2Fe-2S]-[ferredoxin] + 2 H(+). It catalyses the reaction dimethylallyl diphosphate + 2 oxidized [2Fe-2S]-[ferredoxin] + H2O = (2E)-4-hydroxy-3-methylbut-2-enyl diphosphate + 2 reduced [2Fe-2S]-[ferredoxin] + 2 H(+). Its pathway is isoprenoid biosynthesis; dimethylallyl diphosphate biosynthesis; dimethylallyl diphosphate from (2E)-4-hydroxy-3-methylbutenyl diphosphate: step 1/1. It participates in isoprenoid biosynthesis; isopentenyl diphosphate biosynthesis via DXP pathway; isopentenyl diphosphate from 1-deoxy-D-xylulose 5-phosphate: step 6/6. In terms of biological role, catalyzes the conversion of 1-hydroxy-2-methyl-2-(E)-butenyl 4-diphosphate (HMBPP) into a mixture of isopentenyl diphosphate (IPP) and dimethylallyl diphosphate (DMAPP). Acts in the terminal step of the DOXP/MEP pathway for isoprenoid precursor biosynthesis. The sequence is that of 4-hydroxy-3-methylbut-2-enyl diphosphate reductase from Magnetococcus marinus (strain ATCC BAA-1437 / JCM 17883 / MC-1).